Here is a 415-residue protein sequence, read N- to C-terminus: Esterase FrsA (415 aa).

Belongs to the FrsA family.

It catalyses the reaction a carboxylic ester + H2O = an alcohol + a carboxylate + H(+). Functionally, catalyzes the hydrolysis of esters. The sequence is that of Esterase FrsA from Serratia proteamaculans (strain 568).